The sequence spans 343 residues: N-acetyl-gamma-glutamyl-phosphate reductase (343 aa).

C147 is a catalytic residue.

It belongs to the NAGSA dehydrogenase family. Type 1 subfamily.

The protein resides in the cytoplasm. It catalyses the reaction N-acetyl-L-glutamate 5-semialdehyde + phosphate + NADP(+) = N-acetyl-L-glutamyl 5-phosphate + NADPH + H(+). It functions in the pathway amino-acid biosynthesis; L-arginine biosynthesis; N(2)-acetyl-L-ornithine from L-glutamate: step 3/4. In terms of biological role, catalyzes the NADPH-dependent reduction of N-acetyl-5-glutamyl phosphate to yield N-acetyl-L-glutamate 5-semialdehyde. This is N-acetyl-gamma-glutamyl-phosphate reductase from Staphylococcus aureus (strain Mu3 / ATCC 700698).